The following is a 341-amino-acid chain: Guanine nucleotide-binding protein subunit beta (341 aa).

WD repeat units follow at residues 54-93 (GHLA…KVHA), 96-135 (LRSS…GNVR), 142-180 (GHTG…QTTA), 183-222 (GHTG…CKQT), 225-264 (GHES…EIGM), 269-308 (NIIC…RAGV), and 311-341 (GHDN…RIWN).

Belongs to the WD repeat G protein beta family. As to quaternary structure, g proteins are composed of 3 units, alpha, beta and gamma. The G protein beta1-gamma2 dimer interacts with calmodulin. Abundantly expressed in gills, gonad and mantle and at lower levels in digestion gland. Not detected in muscle.

It localises to the cytoplasm. In terms of biological role, guanine nucleotide-binding proteins (G proteins) are involved as a modulator or transducer in various transmembrane signaling systems. The beta and gamma chains are required for the GTPase activity, for replacement of GDP by GTP, and for G protein-effector interaction. This Pinctada fucata (Akoya pearl oyster) protein is Guanine nucleotide-binding protein subunit beta.